The following is a 265-amino-acid chain: Ribosomal RNA small subunit methyltransferase A (265 aa).

S-adenosyl-L-methionine is bound by residues H17, L19, G44, E65, D90, and N112.

The protein belongs to the class I-like SAM-binding methyltransferase superfamily. rRNA adenine N(6)-methyltransferase family. RsmA subfamily.

The protein localises to the cytoplasm. The catalysed reaction is adenosine(1518)/adenosine(1519) in 16S rRNA + 4 S-adenosyl-L-methionine = N(6)-dimethyladenosine(1518)/N(6)-dimethyladenosine(1519) in 16S rRNA + 4 S-adenosyl-L-homocysteine + 4 H(+). Functionally, specifically dimethylates two adjacent adenosines (A1518 and A1519) in the loop of a conserved hairpin near the 3'-end of 16S rRNA in the 30S particle. May play a critical role in biogenesis of 30S subunits. In Xylella fastidiosa (strain 9a5c), this protein is Ribosomal RNA small subunit methyltransferase A.